The primary structure comprises 351 residues: Dihydroorotate dehydrogenase (quinone) (351 aa).

FMN contacts are provided by residues 61–65 (AGLDK) and threonine 85. Residue lysine 65 coordinates substrate. 110–114 (NRMGF) lines the substrate pocket. Asparagine 139 and asparagine 172 together coordinate FMN. Residue asparagine 172 participates in substrate binding. The active-site Nucleophile is the serine 175. Asparagine 177 is a binding site for substrate. Residues lysine 217 and threonine 245 each contribute to the FMN site. 246–247 (NT) is a substrate binding site. FMN contacts are provided by residues glycine 268, glycine 297, and 318 to 319 (YS).

Belongs to the dihydroorotate dehydrogenase family. Type 2 subfamily. In terms of assembly, monomer. FMN serves as cofactor.

It is found in the cell membrane. It carries out the reaction (S)-dihydroorotate + a quinone = orotate + a quinol. It participates in pyrimidine metabolism; UMP biosynthesis via de novo pathway; orotate from (S)-dihydroorotate (quinone route): step 1/1. In terms of biological role, catalyzes the conversion of dihydroorotate to orotate with quinone as electron acceptor. In Xanthomonas axonopodis pv. citri (strain 306), this protein is Dihydroorotate dehydrogenase (quinone).